Here is a 255-residue protein sequence, read N- to C-terminus: MADGISSFWGPVTSTIECCEMNYAYSSYIAEFYNTISNVPGILLALIGLVNALRQRFEKRFSILHISNMILAIGSMLYHATLQHVQQQSDETPMVWEILLYMYILYSPDWHYRSTMPTFLFLYGAAFAIVHAYLRFGIGFKVHYVILCLLCIPRMYKYYIHTEDTAAKRIAKWYVATILVGSICWFCDRVFCKTISQWPVNPQGHALWHVFMSFNSYCANTFLMFCRAQQRGWNPKVKYFLGVLPYVKIEKPKTQ.

At 1-28 (MADGISSFWGPVTSTIECCEMNYAYSSY) the chain is on the lumenal side. A helical membrane pass occupies residues 29 to 49 (IAEFYNTISNVPGILLALIGL). Over 50–60 (VNALRQRFEKR) the chain is Cytoplasmic. The chain crosses the membrane as a helical span at residues 61-81 (FSILHISNMILAIGSMLYHAT). His-79 is a Zn(2+) binding site. At 82-91 (LQHVQQQSDE) the chain is on the lumenal side. A helical transmembrane segment spans residues 92 to 112 (TPMVWEILLYMYILYSPDWHY). Residues 113–118 (RSTMPT) lie on the Cytoplasmic side of the membrane. 2 helical membrane-spanning segments follow: residues 119-139 (FLFL…FGIG) and 140-160 (FKVH…KYYI). The Cytoplasmic portion of the chain corresponds to 161–169 (HTEDTAAKR). The helical transmembrane segment at 170-192 (IAKWYVATILVGSICWFCDRVFC) threads the bilayer. Residues 193-205 (KTISQWPVNPQGH) lie on the Lumenal side of the membrane. Residues His-205 and His-209 each coordinate Zn(2+). The chain crosses the membrane as a helical span at residues 206–226 (ALWHVFMSFNSYCANTFLMFC). Topologically, residues 227-255 (RAQQRGWNPKVKYFLGVLPYVKIEKPKTQ) are cytoplasmic.

This sequence belongs to the alkaline ceramidase family. Zn(2+) is required as a cofactor. In terms of tissue distribution, mostly expressed in roots, shoot meristems and pollen, and, to a lower extent, in mature leaves.

Its subcellular location is the endoplasmic reticulum membrane. It is found in the golgi apparatus membrane. Functionally, hydrolyzes only phytoceramide into phytosphingosine and free fatty acid. Does not have reverse activity. Affects plant morphogenesis. Required for the formation of wax layer that ensure cuticle permeability. Implicated in abscisic acid (ABA)-mediated stomatal closure. Involved in both biotic and abiotic stresses. Promotes salt resistance and defenses responses toward pathogenic bacteria (e.g. P.syringae) and against the fungal toxin fumonisin B1 (FB1). The chain is Alkaline ceramidase from Arabidopsis thaliana (Mouse-ear cress).